A 319-amino-acid polypeptide reads, in one-letter code: MPRGQKSKLRAREKRRKARDETRGLNVPQVTEAEEEEAPCCSSSVSGGAASSSPAAGIPQEPQRAPTTAAAAAAGVSSTKSKKGAKSHQGEKNASSSQASTSTKSPSEDPLTRKSGSLVQFLLYKYKIKKSVTKGEMLKIVGKRFREHFPEILKKASEGLSVVFGLELNKVNPNGHTYTFIDKVDLTDEESLLSSWDFPRRKLLMPLLGVIFLNGNSATEEEIWEFLNMLGVYDGEEHSVFGEPWKLITKDLVQEKYLEYKQVPSSDPPRFQFLWGPRAYAETSKMKVLEFLAKVNGTTPCAFPTHYEEALKDEEKAGV.

The span at 1-17 (MPRGQKSKLRAREKRRK) shows a compositional bias: basic residues. Residues 1 to 112 (MPRGQKSKLR…TKSPSEDPLT (112 aa)) are disordered. Low complexity-rich tracts occupy residues 39–57 (PCCS…PAAG), 67–79 (TTAA…VSST), and 94–105 (ASSSQASTSTKS). Phosphoserine is present on residues S77 and S105. Residues 111–310 (LTRKSGSLVQ…CAFPTHYEEA (200 aa)) form the MAGE domain.

Interacts with TRIM28. As to expression, expressed in testis and placenta, and in a significant fraction of tumors of various histologic types.

Its function is as follows. May enhance ubiquitin ligase activity of RING-type zinc finger-containing E3 ubiquitin-protein ligases. Proposed to act through recruitment and/or stabilization of the Ubl-conjugating enzyme (E2) at the E3:substrate complex. In Homo sapiens (Human), this protein is Melanoma-associated antigen B2 (MAGEB2).